Here is a 307-residue protein sequence, read N- to C-terminus: MAMADQRNDKPGRPAAQRERRGWLSRIAPGVRNFAKRETPENLWVKCPETGEMIYRPDLEAALWVTPSGHHMRIGASQRLAVTFDDGQFEKIDCPQVVEDPHKFPDDRAYPDRLKAARKQTGEQDSIAAAYGHIRGQPAVVMVQDFAFMGGSLGMGAGEAFIAAAKEAVKRQVPLVIFTASGGARMQEGTLSLMQMARTTLALNEVKDAGLPYVVVLTDPTTGGVLASYAMLGDVHLAEPNATIGFSGRRVIEQTIRETLPPGFQKSEFLVERGMIDQVVRRADLPEVLGSVLKTLMMGRERLSPAA.

The tract at residues 1–21 (MAMADQRNDKPGRPAAQRERR) is disordered. One can recognise a CoA carboxyltransferase N-terminal domain in the interval 43–307 (LWVKCPETGE…MGRERLSPAA (265 aa)).

The protein belongs to the AccD/PCCB family. Acetyl-CoA carboxylase is a heterohexamer composed of biotin carboxyl carrier protein (AccB), biotin carboxylase (AccC) and two subunits each of ACCase subunit alpha (AccA) and ACCase subunit beta (AccD).

The protein resides in the cytoplasm. The catalysed reaction is N(6)-carboxybiotinyl-L-lysyl-[protein] + acetyl-CoA = N(6)-biotinyl-L-lysyl-[protein] + malonyl-CoA. Its pathway is lipid metabolism; malonyl-CoA biosynthesis; malonyl-CoA from acetyl-CoA: step 1/1. Component of the acetyl coenzyme A carboxylase (ACC) complex. Biotin carboxylase (BC) catalyzes the carboxylation of biotin on its carrier protein (BCCP) and then the CO(2) group is transferred by the transcarboxylase to acetyl-CoA to form malonyl-CoA. The sequence is that of Acetyl-coenzyme A carboxylase carboxyl transferase subunit beta from Phenylobacterium zucineum (strain HLK1).